A 227-amino-acid chain; its full sequence is Zinc finger protein 511 (227 aa).

3 C2H2-type zinc fingers span residues 80-105 (FTCQVAGCCQVFAAIEDYQHHYHMMH), 107-130 (NTCSFCNRAFPSGHLLDVHILEWH), and 144-169 (YQCLVESCPEKFKTSQDRKDHMVRLH). Residues 180 to 204 (PKTNRGPAMPAAADAATRAPTDDSD) form a disordered region. The span at 186–198 (PAMPAAADAATRA) shows a compositional bias: low complexity.

This sequence belongs to the krueppel C2H2-type zinc-finger protein family.

The protein resides in the nucleus. Its function is as follows. May be involved in transcriptional regulation. This chain is Zinc finger protein 511 (Znf511), found in Mus musculus (Mouse).